The chain runs to 209 residues: Uracil phosphoribosyltransferase (209 aa).

5-phospho-alpha-D-ribose 1-diphosphate-binding positions include Arg79, Arg104, and 131–139; that span reads DPMLATGGS. Uracil contacts are provided by residues Ile194 and 199–201; that span reads GDA. Asp200 contributes to the 5-phospho-alpha-D-ribose 1-diphosphate binding site.

It belongs to the UPRTase family. It depends on Mg(2+) as a cofactor.

The enzyme catalyses UMP + diphosphate = 5-phospho-alpha-D-ribose 1-diphosphate + uracil. It participates in pyrimidine metabolism; UMP biosynthesis via salvage pathway; UMP from uracil: step 1/1. Allosterically activated by GTP. In terms of biological role, catalyzes the conversion of uracil and 5-phospho-alpha-D-ribose 1-diphosphate (PRPP) to UMP and diphosphate. This chain is Uracil phosphoribosyltransferase, found in Streptococcus uberis (strain ATCC BAA-854 / 0140J).